A 295-amino-acid polypeptide reads, in one-letter code: Keratin-like protein KRT222 (295 aa).

Residues 1–150 (MELSQLLNEI…HLLEKEEIRY (150 aa)) form the IF rod domain. A coiled-coil region spans residues 2–150 (ELSQLLNEIR…HLLEKEEIRY (149 aa)).

The protein belongs to the intermediate filament family.

The protein is Keratin-like protein KRT222 (KRT222) of Homo sapiens (Human).